A 78-amino-acid chain; its full sequence is uncharacterized protein (78 aa).

The chain crosses the membrane as a helical span at residues 21 to 43; sequence SPFLFGAPLVGGLLGGFLGSALF.

It localises to the membrane. This is an uncharacterized protein from Bacillus subtilis (strain 168).